Consider the following 909-residue polypeptide: Cutinase transcription factor 1 alpha (909 aa).

Positions 1–51 are disordered; that stretch reads MSSGDAPPQAQPQPHQQEQPNQRQSSTPAPSAAPVPPAPSTSTSNSAGGVS. The segment covering 12-30 has biased composition (low complexity); the sequence is PQPHQQEQPNQRQSSTPAP. Residues 61-90 constitute a DNA-binding region (zn(2)-C6 fungal-type); sequence CETCHARKVRCDAASLGVPCTNCVAFQIEC. 3 disordered regions span residues 95–159, 651–757, and 841–878; these read PKRK…EAQA, AEGK…SFSV, and LPQGFQGHTNMWQPNLDPNLPEGQSPDSWSSTSGQGQA. The span at 110 to 119 shows a compositional bias: basic and acidic residues; it reads KDSDSDRGDG. Residues 142–156 show a composition bias toward polar residues; that stretch reads VFHSHNGTPPTTLTE. Positions 669–683 are enriched in basic and acidic residues; sequence QHSRQQEAPKRKYDE. Polar residues-rich tracts occupy residues 704 to 717, 737 to 755, and 865 to 878; these read PQTPSAVKAETSSM, GGTNSRPQTRPATPFNPSF, and SPDSWSSTSGQGQA.

Its subcellular location is the nucleus. The protein is Cutinase transcription factor 1 alpha (CTF1-ALPHA) of Fusarium vanettenii (Neocosmospora pisi).